The primary structure comprises 307 residues: Elongation factor Ts (307 aa).

The tract at residues 80–83 (TDFV) is involved in Mg(2+) ion dislocation from EF-Tu.

It belongs to the EF-Ts family.

It localises to the cytoplasm. Functionally, associates with the EF-Tu.GDP complex and induces the exchange of GDP to GTP. It remains bound to the aminoacyl-tRNA.EF-Tu.GTP complex up to the GTP hydrolysis stage on the ribosome. This is Elongation factor Ts from Bradyrhizobium diazoefficiens (strain JCM 10833 / BCRC 13528 / IAM 13628 / NBRC 14792 / USDA 110).